The following is a 1092-amino-acid chain: Isoleucine--tRNA ligase (1092 aa).

A 'HIGH' region motif is present at residues 53-63 (PFANGLPHYGH). The 'KMSKS' region motif lies at 613-617 (KLSKR). K616 serves as a coordination point for ATP.

The protein belongs to the class-I aminoacyl-tRNA synthetase family. IleS type 2 subfamily. Monomer. Zn(2+) is required as a cofactor.

It localises to the cytoplasm. The catalysed reaction is tRNA(Ile) + L-isoleucine + ATP = L-isoleucyl-tRNA(Ile) + AMP + diphosphate. Functionally, catalyzes the attachment of isoleucine to tRNA(Ile). As IleRS can inadvertently accommodate and process structurally similar amino acids such as valine, to avoid such errors it has two additional distinct tRNA(Ile)-dependent editing activities. One activity is designated as 'pretransfer' editing and involves the hydrolysis of activated Val-AMP. The other activity is designated 'posttransfer' editing and involves deacylation of mischarged Val-tRNA(Ile). In Rickettsia conorii (strain ATCC VR-613 / Malish 7), this protein is Isoleucine--tRNA ligase.